We begin with the raw amino-acid sequence, 288 residues long: DegV domain-containing protein (288 aa).

The DegV domain maps to 3–282 (IAVMTDSTSY…SGGLGLGYVG (280 aa)). Hexadecanoate contacts are provided by threonine 62 and serine 95.

May bind long-chain fatty acids, such as palmitate, and may play a role in lipid transport or fatty acid metabolism. The sequence is that of DegV domain-containing protein from Staphylococcus aureus.